A 290-amino-acid polypeptide reads, in one-letter code: Nucleoid occlusion protein (290 aa).

A DNA-binding region (H-T-H motif) is located at residues 153-172; the sequence is EALAQRLGKGQSTVANKLRL.

This sequence belongs to the ParB family.

It localises to the cytoplasm. Its subcellular location is the nucleoid. In terms of biological role, effects nucleoid occlusion by binding relatively nonspecifically to DNA and preventing the assembly of the division machinery in the vicinity of the nucleoid, especially under conditions that disturb the cell cycle. It helps to coordinate cell division and chromosome segregation by preventing the formation of the Z ring through the nucleoid, which would cause chromosome breakage. The polypeptide is Nucleoid occlusion protein (Bacillus mycoides (strain KBAB4) (Bacillus weihenstephanensis)).